Here is a 119-residue protein sequence, read N- to C-terminus: MAGRGKLIAVIGDEDTVTGFLLGGIGELNKNRHPNFLVVEKDTTINEIEDTFRQFLNRDDIGIILINQYIAEMVRHALDAHQRSIPAVLEIPSKEHPYDAAKDSILRRARGMFTAEDLR.

This sequence belongs to the V-ATPase F subunit family. As to quaternary structure, V-ATPase is a heteromultimeric enzyme made up of two complexes: the ATP-hydrolytic V1 complex and the proton translocation V0 complex. The V1 complex consists of three catalytic AB heterodimers that form a heterohexamer, three peripheral stalks each consisting of EG heterodimers, one central rotor including subunits D and F, and the regulatory subunits C and H. The proton translocation complex V0 consists of the proton transport subunit a, a ring of proteolipid subunits c9c'', rotary subunit d, subunits e and f, and the accessory subunits ATP6AP1/Ac45 and ATP6AP2/PRR. Expressed in brain (at protein level).

It localises to the cytoplasmic vesicle. The protein localises to the secretory vesicle. The protein resides in the synaptic vesicle membrane. It is found in the clathrin-coated vesicle membrane. Its function is as follows. Subunit of the V1 complex of vacuolar(H+)-ATPase (V-ATPase), a multisubunit enzyme composed of a peripheral complex (V1) that hydrolyzes ATP and a membrane integral complex (V0) that translocates protons. V-ATPase is responsible for acidifying and maintaining the pH of intracellular compartments and in some cell types, is targeted to the plasma membrane, where it is responsible for acidifying the extracellular environment. The sequence is that of V-type proton ATPase subunit F (ATP6V1F) from Bos taurus (Bovine).